The primary structure comprises 473 residues: tRNA-2-methylthio-N(6)-dimethylallyladenosine synthase (473 aa).

The MTTase N-terminal domain maps to 5–125; it reads RKLHIKSFGC…LPQLLAEAAR (121 aa). Residues Cys14, Cys50, Cys88, Cys166, Cys170, and Cys173 each coordinate [4Fe-4S] cluster. Positions 152-384 constitute a Radical SAM core domain; the sequence is RARGISAFVT…QELIDSQQAA (233 aa). Positions 387-449 constitute a TRAM domain; the sequence is AAVIGTTVEV…RYSLIGELAA (63 aa). The disordered stretch occupies residues 452–473; sequence QHSGFATRSEDSPQSLPITTGA.

This sequence belongs to the methylthiotransferase family. MiaB subfamily. As to quaternary structure, monomer. Requires [4Fe-4S] cluster as cofactor.

The protein resides in the cytoplasm. The catalysed reaction is N(6)-dimethylallyladenosine(37) in tRNA + (sulfur carrier)-SH + AH2 + 2 S-adenosyl-L-methionine = 2-methylsulfanyl-N(6)-dimethylallyladenosine(37) in tRNA + (sulfur carrier)-H + 5'-deoxyadenosine + L-methionine + A + S-adenosyl-L-homocysteine + 2 H(+). Functionally, catalyzes the methylthiolation of N6-(dimethylallyl)adenosine (i(6)A), leading to the formation of 2-methylthio-N6-(dimethylallyl)adenosine (ms(2)i(6)A) at position 37 in tRNAs that read codons beginning with uridine. This is tRNA-2-methylthio-N(6)-dimethylallyladenosine synthase from Rhodopseudomonas palustris (strain BisB18).